The chain runs to 793 residues: Sucrose synthase (793 aa).

The segment at 263-742 (MISRILIVSI…ALARVAERYT (480 aa)) is GT-B glycosyltransferase.

The protein belongs to the glycosyltransferase 1 family. In terms of assembly, homotetramer.

It carries out the reaction an NDP-alpha-D-glucose + D-fructose = a ribonucleoside 5'-diphosphate + sucrose + H(+). It catalyses the reaction ADP-alpha-D-glucose + D-fructose = sucrose + ADP + H(+). In terms of biological role, catalyzes the reversible conversion of sucrose and a nucleotide disphosphate (NDP) into fructose and NDP-glucose; although the reaction is freely reversible in vitro, the physiological reaction seems to be sucrose cleavage. Unlike characterized plant enzymes prefers ADP as a cosubstrate, whereas plants prefer UDP. The KM for sucrose is 45-fold lower in the presence of ADP than UDP. Its preference for ADP over UDP suggests it may directly link sucrose and glycogen metabolism. This is Sucrose synthase from Acidithiobacillus caldus (strain ATCC 51756 / DSM 8584 / KU).